The following is a 156-amino-acid chain: ATP synthase subunit b (156 aa).

Residues 7–27 traverse the membrane as a helical segment; sequence LFAQMVVFLILAWFTMKFVWP.

Belongs to the ATPase B chain family. As to quaternary structure, F-type ATPases have 2 components, F(1) - the catalytic core - and F(0) - the membrane proton channel. F(1) has five subunits: alpha(3), beta(3), gamma(1), delta(1), epsilon(1). F(0) has three main subunits: a(1), b(2) and c(10-14). The alpha and beta chains form an alternating ring which encloses part of the gamma chain. F(1) is attached to F(0) by a central stalk formed by the gamma and epsilon chains, while a peripheral stalk is formed by the delta and b chains.

It localises to the cell inner membrane. In terms of biological role, f(1)F(0) ATP synthase produces ATP from ADP in the presence of a proton or sodium gradient. F-type ATPases consist of two structural domains, F(1) containing the extramembraneous catalytic core and F(0) containing the membrane proton channel, linked together by a central stalk and a peripheral stalk. During catalysis, ATP synthesis in the catalytic domain of F(1) is coupled via a rotary mechanism of the central stalk subunits to proton translocation. Its function is as follows. Component of the F(0) channel, it forms part of the peripheral stalk, linking F(1) to F(0). The protein is ATP synthase subunit b of Paraburkholderia phymatum (strain DSM 17167 / CIP 108236 / LMG 21445 / STM815) (Burkholderia phymatum).